The chain runs to 563 residues: Arginine--tRNA ligase (563 aa).

Residues 121–131 (PNIAKPFSIGH) carry the 'HIGH' region motif.

It belongs to the class-I aminoacyl-tRNA synthetase family. Monomer.

The protein localises to the cytoplasm. The enzyme catalyses tRNA(Arg) + L-arginine + ATP = L-arginyl-tRNA(Arg) + AMP + diphosphate. This Streptococcus thermophilus (strain CNRZ 1066) protein is Arginine--tRNA ligase.